Consider the following 359-residue polypeptide: Peptide chain release factor 1 (359 aa).

At glutamine 234 the chain carries N5-methylglutamine. The disordered stretch occupies residues serine 283–arginine 305.

This sequence belongs to the prokaryotic/mitochondrial release factor family. Post-translationally, methylated by PrmC. Methylation increases the termination efficiency of RF1.

The protein localises to the cytoplasm. In terms of biological role, peptide chain release factor 1 directs the termination of translation in response to the peptide chain termination codons UAG and UAA. The chain is Peptide chain release factor 1 from Methylobacterium nodulans (strain LMG 21967 / CNCM I-2342 / ORS 2060).